Here is a 328-residue protein sequence, read N- to C-terminus: CMP-N-acetylneuraminate-beta-galactosamide-alpha-2,3-sialyltransferase 4 (328 aa).

The Cytoplasmic segment spans residues 1–7; it reads MCPAGWK. Residues 8 to 25 traverse the membrane as a helical; Signal-anchor for type II membrane protein segment; that stretch reads LLAMLALVLVVMVWYSIS. Topologically, residues 26–328 are lumenal; that stretch reads REDSFYFPIP…MGAVKNLTSF (303 aa). 4 N-linked (GlcNAc...) asparagine glycosylation sites follow: Asn56, Asn126, Asn305, and Asn324. An intrachain disulfide couples Cys115 to Cys268.

The protein belongs to the glycosyltransferase 29 family. The soluble form derives from the membrane form by proteolytic processing.

It localises to the golgi apparatus. The protein resides in the golgi stack membrane. Its subcellular location is the secreted. It carries out the reaction a beta-D-galactosyl-(1-&gt;3)-N-acetyl-beta-D-galactosaminyl derivative + CMP-N-acetyl-beta-neuraminate = an N-acetyl-alpha-neuraminyl-(2-&gt;3)-beta-D-galactosyl-(1-&gt;3)-N-acetyl-beta-D-galactosaminyl derivative + CMP + H(+). The catalysed reaction is a beta-D-galactosyl-(1-&gt;3)-N-acetyl-alpha-D-galactosaminyl derivative + CMP-N-acetyl-beta-neuraminate = an N-acetyl-alpha-neuraminyl-(2-&gt;3)-beta-D-galactosyl-(1-&gt;3)-N-acetyl-alpha-D-galactosaminyl derivative + CMP + H(+). It catalyses the reaction a beta-D-galactosyl-(1-&gt;4)-N-acetyl-beta-D-glucosaminyl derivative + CMP-N-acetyl-beta-neuraminate = an N-acetyl-alpha-neuraminyl-(2-&gt;3)-beta-D-galactosyl-(1-&gt;4)-N-acetyl-beta-D-glucosaminyl derivative + CMP + H(+). The enzyme catalyses a ganglioside GM1 (d18:1(4E)) + CMP-N-acetyl-beta-neuraminate = a ganglioside GD1a (d18:1(4E)) + CMP + H(+). It carries out the reaction a ganglioside GA1 (d18:1(4E)) + CMP-N-acetyl-beta-neuraminate = a ganglioside GM1b (d18:1(4E)) + CMP + H(+). The catalysed reaction is a ganglioside GT1c (d18:1(4E)) + CMP-N-acetyl-beta-neuraminate = a ganglioside GQ1c (d18:1(4E)) + CMP + H(+). It catalyses the reaction a neolactoside nLc4Cer + CMP-N-acetyl-beta-neuraminate = a neolactoside IV(3)-alpha-NeuAc-nLc4Cer + CMP + H(+). The enzyme catalyses a neolactoside nLc4Cer(d18:1(4E)) + CMP-N-acetyl-beta-neuraminate = a neolactoside IV(3)-alpha-NeuAc-nLc4Cer(d18:1(4E)) + CMP + H(+). The protein operates within protein modification; protein glycosylation. It functions in the pathway glycolipid biosynthesis. A beta-galactoside alpha2-3 sialyltransferase involved in terminal sialylation of glycoproteins and glycolipids. Catalyzes the transfer of sialic acid (N-acetyl-neuraminic acid; Neu5Ac) from the nucleotide sugar donor CMP-Neu5Ac onto acceptor Galbeta-(1-&gt;3)-GalNAc- and Galbeta-(1-&gt;4)-GlcNAc-terminated glycoconjugates through an alpha2-3 linkage. Plays a major role in hemostasis. Responsible for sialylation of plasma VWF/von Willebrand factor, preventing its recognition by asialoglycoprotein receptors (ASGPR) and subsequent clearance. Regulates ASGPR-mediated clearance of platelets. Participates in the biosynthesis of the sialyl Lewis X epitopes, both on O- and N-glycans, which are recognized by SELE/E-selectin, SELP/P-selectin and SELL/L-selectin. Essential for selectin-mediated rolling and adhesion of leukocytes during extravasation. Contributes to adhesion and transendothelial migration of neutrophils likely through terminal sialylation of CXCR2. In glycosphingolipid biosynthesis, sialylates GM1 and GA1 gangliosides to form GD1a and GM1b, respectively. Metabolizes brain c-series ganglioside GT1c forming GQ1c. Synthesizes ganglioside LM1 (IV3Neu5Ac-nLc4Cer), a major structural component of peripheral nerve myelin. In Pan troglodytes (Chimpanzee), this protein is CMP-N-acetylneuraminate-beta-galactosamide-alpha-2,3-sialyltransferase 4 (ST3GAL4).